Consider the following 131-residue polypeptide: ATP synthase epsilon chain (131 aa).

It belongs to the ATPase epsilon chain family. F-type ATPases have 2 components, CF(1) - the catalytic core - and CF(0) - the membrane proton channel. CF(1) has five subunits: alpha(3), beta(3), gamma(1), delta(1), epsilon(1). CF(0) has three main subunits: a, b and c.

The protein localises to the cell membrane. Functionally, produces ATP from ADP in the presence of a proton gradient across the membrane. This is ATP synthase epsilon chain from Bacillus licheniformis (strain ATCC 14580 / DSM 13 / JCM 2505 / CCUG 7422 / NBRC 12200 / NCIMB 9375 / NCTC 10341 / NRRL NRS-1264 / Gibson 46).